Consider the following 226-residue polypeptide: Orotidine 5'-phosphate decarboxylase (226 aa).

Residues Asp-9, Lys-31, 58–67, Thr-115, Arg-176, Gln-184, Gly-204, and Arg-205 each bind substrate; that span reads DLKLYDIPNT. The active-site Proton donor is Lys-60.

The protein belongs to the OMP decarboxylase family. Type 1 subfamily. Homodimer.

The enzyme catalyses orotidine 5'-phosphate + H(+) = UMP + CO2. Its pathway is pyrimidine metabolism; UMP biosynthesis via de novo pathway; UMP from orotate: step 2/2. In terms of biological role, catalyzes the decarboxylation of orotidine 5'-monophosphate (OMP) to uridine 5'-monophosphate (UMP). This is Orotidine 5'-phosphate decarboxylase from Wolbachia pipientis subsp. Culex pipiens (strain wPip).